A 62-amino-acid chain; its full sequence is UPF0370 protein ESA_00777 (62 aa).

Residues 4–24 (LGKYWWVLVLVFLLGVLLNVI) traverse the membrane as a helical segment. A compositionally biased stretch (basic and acidic residues) spans 36–51 (MDNRPELPPHRDFNDK). The segment at 36–62 (MDNRPELPPHRDFNDKWDDEDDWPKKK) is disordered. A compositionally biased stretch (acidic residues) spans 52-62 (WDDEDDWPKKK).

Belongs to the UPF0370 family.

It is found in the cell membrane. The polypeptide is UPF0370 protein ESA_00777 (Cronobacter sakazakii (strain ATCC BAA-894) (Enterobacter sakazakii)).